Reading from the N-terminus, the 461-residue chain is MLKQKTLKDSFSLSGKGLHTGLDLTVTFNPAPDNHGYKIQRIDLEGQPTIDAVADNVTETTRGTVLSKNGVKVSTVEHGMAALYALGIDNCLIQVNGPEFPILDGSAQYYVQEIERVGTEEQSAVKDFYIIKSKIEFRDESTGSSIIVLPDENFSLNVLVSYDSTIIPNQFATLEDMHNFKDEVAASRTFVFVREIEPLLSAGLIKGGDLDNAIVIYERKMSQESYDKLADVMGVPHMDADQLGYINHKPLVWPNECARHKLLDVIGDLALIGKPIKGRIIATRPGHTINNKFARQMRKEIRLHEIQAPTYDCNREPVMDVNRIRELLPHRYPFQLVDKVIEMGASYIVGIKNITANEPFFQGHFPQEPVMPGVLQIEAMAQVGGLLVLNSVDEPERYSTYFMKIDGVKFRQKVVPGDTLLFRVELLAPIRRGISTMKGYAFVGEKVVCEAEFMAQIVKNK.

Residues 1-302 (MLKQKTLKDS…FARQMRKEIR (302 aa)) are UDP-3-O-acyl-N-acetylglucosamine deacetylase. The Zn(2+) site is built by His78, His260, and Asp264. Catalysis depends on His287, which acts as the Proton donor. A 3-hydroxyacyl-[acyl-carrier-protein] dehydratase region spans residues 303–461 (LHEIQAPTYD…EFMAQIVKNK (159 aa)). The active site involves His364.

The protein in the N-terminal section; belongs to the LpxC family. It in the C-terminal section; belongs to the thioester dehydratase family. The cofactor is Zn(2+).

The protein resides in the cytoplasm. It catalyses the reaction a UDP-3-O-[(3R)-3-hydroxyacyl]-N-acetyl-alpha-D-glucosamine + H2O = a UDP-3-O-[(3R)-3-hydroxyacyl]-alpha-D-glucosamine + acetate. The catalysed reaction is a (3R)-hydroxyacyl-[ACP] = a (2E)-enoyl-[ACP] + H2O. The protein operates within glycolipid biosynthesis; lipid IV(A) biosynthesis; lipid IV(A) from (3R)-3-hydroxytetradecanoyl-[acyl-carrier-protein] and UDP-N-acetyl-alpha-D-glucosamine: step 2/6. Its function is as follows. Catalyzes the hydrolysis of UDP-3-O-myristoyl-N-acetylglucosamine to form UDP-3-O-myristoylglucosamine and acetate, the committed step in lipid A biosynthesis. In terms of biological role, involved in unsaturated fatty acids biosynthesis. Catalyzes the dehydration of short chain beta-hydroxyacyl-ACPs and long chain saturated and unsaturated beta-hydroxyacyl-ACPs. The protein is Bifunctional enzyme LpxC/FabZ (lpxC/fabZ) of Bacteroides thetaiotaomicron (strain ATCC 29148 / DSM 2079 / JCM 5827 / CCUG 10774 / NCTC 10582 / VPI-5482 / E50).